An 842-amino-acid polypeptide reads, in one-letter code: Follistatin-related protein 4 (842 aa).

An N-terminal signal peptide occupies residues 1–22; the sequence is MKPGGFWLHLTLLGASLPAALG. The Kazal-like domain maps to 81 to 135; that stretch reads KTGEPECQCLEACRPSYVPVCGSDGRFYENHCKLHRAACLLGKRITVIHSKDCFL. 3 disulfides stabilise this stretch: cysteine 87–cysteine 119, cysteine 93–cysteine 112, and cysteine 101–cysteine 133. One can recognise an EF-hand domain in the interval 174–209; the sequence is QKRLLVESLFRDLDADGNGHLSSSELAQHVLKKQDL. Ca(2+)-binding residues include aspartate 187, aspartate 189, asparagine 191, histidine 193, and glutamate 198. Ig-like domains lie at 251-338 and 341-426; these read PEDR…LQVN and PVIR…EDIS. 2 disulfide bridges follow: cysteine 270-cysteine 321 and cysteine 362-cysteine 413. Asparagine 318 carries an N-linked (GlcNAc...) asparagine glycan.

It is found in the secreted. In Homo sapiens (Human), this protein is Follistatin-related protein 4 (FSTL4).